The sequence spans 338 residues: Ornithine carbamoyltransferase, catabolic (338 aa).

Residues 65-68, Q92, R116, and 143-146 each bind carbamoyl phosphate; these read STRT and HPTQ. L-ornithine contacts are provided by residues N175, D239, and 243–244; that span reads SM. Carbamoyl phosphate contacts are provided by residues 280–281 and R325; that span reads CL.

It belongs to the aspartate/ornithine carbamoyltransferase superfamily. OTCase family.

It is found in the cytoplasm. It catalyses the reaction carbamoyl phosphate + L-ornithine = L-citrulline + phosphate + H(+). Its pathway is amino-acid degradation; L-arginine degradation via ADI pathway; carbamoyl phosphate from L-arginine: step 2/2. Functionally, reversibly catalyzes the transfer of the carbamoyl group from carbamoyl phosphate (CP) to the N(epsilon) atom of ornithine (ORN) to produce L-citrulline. This chain is Ornithine carbamoyltransferase, catabolic, found in Treponema denticola (strain ATCC 35405 / DSM 14222 / CIP 103919 / JCM 8153 / KCTC 15104).